The chain runs to 139 residues: Putative pre-16S rRNA nuclease (139 aa).

The protein belongs to the YqgF nuclease family.

Its subcellular location is the cytoplasm. Its function is as follows. Could be a nuclease involved in processing of the 5'-end of pre-16S rRNA. This is Putative pre-16S rRNA nuclease from Haemophilus influenzae (strain PittEE).